The chain runs to 467 residues: Gamma-aminobutyric acid receptor subunit gamma-3 (467 aa).

The first 17 residues, 1-17 (MAPKLLLLLCLFSGLHA), serve as a signal peptide directing secretion. At 18–256 (RSRKVEEDEY…FELSRRMGYF (239 aa)) the chain is on the extracellular side. The N-linked (GlcNAc...) asparagine glycan is linked to N110. C171 and C185 form a disulfide bridge. N228 carries an N-linked (GlcNAc...) asparagine glycan. Residues 257 to 277 (TIQTYIPCILTVVLSWVSFWI) traverse the membrane as a helical segment. At 278 to 283 (KKDATP) the chain is on the cytoplasmic side. Residues 284 to 303 (ARTALGITTVLTMTTLSTIA) form a helical membrane-spanning segment. The Extracellular portion of the chain corresponds to 304–311 (RKSLPRVS). Residues 312–332 (YVTAMDLFVTVCFLFVFAALM) form a helical membrane-spanning segment. Residues 333-446 (EYATLNYYSS…DILELDSYSR (114 aa)) lie on the Cytoplasmic side of the membrane. Residues 447–467 (VFFPTSFLLFNLVYWVGYLYL) form a helical membrane-spanning segment.

It belongs to the ligand-gated ion channel (TC 1.A.9) family. Gamma-aminobutyric acid receptor (TC 1.A.9.5) subfamily. GABRG3 sub-subfamily. In terms of assembly, heteropentamer, formed by a combination of alpha (GABRA1-6), beta (GABRB1-3), gamma (GABRG1-3), delta (GABRD), epsilon (GABRE), rho (GABRR1-3), pi (GABRP) and theta (GABRQ) chains, each subunit exhibiting distinct physiological and pharmacological properties. May be palmitoylated. Expressed in brain.

The protein localises to the postsynaptic cell membrane. The protein resides in the cell membrane. It carries out the reaction chloride(in) = chloride(out). Its function is as follows. Gamma subunit of the heteropentameric ligand-gated chloride channel gated by gamma-aminobutyric acid (GABA), a major inhibitory neurotransmitter in the brain. GABA-gated chloride channels, also named GABA(A) receptors (GABAAR), consist of five subunits arranged around a central pore and contain GABA active binding site(s) located at the alpha and beta subunit interface(s). When activated by GABA, GABAARs selectively allow the flow of chloride across the cell membrane down their electrochemical gradient. This is Gamma-aminobutyric acid receptor subunit gamma-3 from Homo sapiens (Human).